The following is a 196-amino-acid chain: ATP-dependent Clp protease proteolytic subunit (196 aa).

Residue serine 98 is the Nucleophile of the active site. The active site involves histidine 123.

Belongs to the peptidase S14 family. As to quaternary structure, fourteen ClpP subunits assemble into 2 heptameric rings which stack back to back to give a disk-like structure with a central cavity, resembling the structure of eukaryotic proteasomes.

Its subcellular location is the cytoplasm. It carries out the reaction Hydrolysis of proteins to small peptides in the presence of ATP and magnesium. alpha-casein is the usual test substrate. In the absence of ATP, only oligopeptides shorter than five residues are hydrolyzed (such as succinyl-Leu-Tyr-|-NHMec, and Leu-Tyr-Leu-|-Tyr-Trp, in which cleavage of the -Tyr-|-Leu- and -Tyr-|-Trp bonds also occurs).. Its function is as follows. Cleaves peptides in various proteins in a process that requires ATP hydrolysis. Has a chymotrypsin-like activity. Plays a major role in the degradation of misfolded proteins. The sequence is that of ATP-dependent Clp protease proteolytic subunit from Anoxybacillus flavithermus (strain DSM 21510 / WK1).